The primary structure comprises 169 residues: Small ribosomal subunit protein uS5c (169 aa).

An S5 DRBM domain is found at 17-80 (WQERVVQIRR…ADGKKHVVEV (64 aa)).

The protein belongs to the universal ribosomal protein uS5 family. Part of the 30S ribosomal subunit. Contacts protein S4.

The protein resides in the plastid. Its subcellular location is the cyanelle. Functionally, with S4 and S12 plays an important role in translational accuracy. In Cyanophora paradoxa, this protein is Small ribosomal subunit protein uS5c (rps5).